Consider the following 84-residue polypeptide: Small ribosomal subunit protein uS17 (84 aa).

The protein belongs to the universal ribosomal protein uS17 family. As to quaternary structure, part of the 30S ribosomal subunit.

In terms of biological role, one of the primary rRNA binding proteins, it binds specifically to the 5'-end of 16S ribosomal RNA. In Caldanaerobacter subterraneus subsp. tengcongensis (strain DSM 15242 / JCM 11007 / NBRC 100824 / MB4) (Thermoanaerobacter tengcongensis), this protein is Small ribosomal subunit protein uS17.